We begin with the raw amino-acid sequence, 211 residues long: Thioredoxin domain-containing protein 9 homolog (211 aa).

Residues 68–178 (YSEIHSEKDF…LEERIARAQV (111 aa)) form the Thioredoxin domain. Residues 184–203 (ESSSLKPKSTTQVRRNVRQS) are compositionally biased toward polar residues. A disordered region spans residues 184–211 (ESSSLKPKSTTQVRRNVRQSARSDSDSE).

The sequence is that of Thioredoxin domain-containing protein 9 homolog from Arabidopsis thaliana (Mouse-ear cress).